Reading from the N-terminus, the 210-residue chain is Nta operon transcriptional regulator (210 aa).

An HTH gntR-type domain is found at 1–55 (MAVSYHFRPGERINEVELAAQLKVSRTPLREALNRLTTEGFLTTTANKGFFARVL). Residues 15-34 (EVELAAQLKVSRTPLREALN) constitute a DNA-binding region (H-T-H motif).

In terms of biological role, probable regulator for the expression of the NTA monooxygenase subunits. The chain is Nta operon transcriptional regulator (ntaR) from Aminobacter aminovorans (Chelatobacter heintzii).